A 207-amino-acid polypeptide reads, in one-letter code: Putative 3-methyladenine DNA glycosylase (207 aa).

This sequence belongs to the DNA glycosylase MPG family.

The chain is Putative 3-methyladenine DNA glycosylase from Burkholderia orbicola (strain MC0-3).